The primary structure comprises 205 residues: Ras-related protein rab-6.2 (205 aa).

GTP is bound by residues 18-25 (EQSVGKTS), Thr-42, 66-70 (TAGQE), and 124-127 (KTDL). S-geranylgeranyl cysteine attachment occurs at residues Cys-203 and Cys-205. The residue at position 205 (Cys-205) is a Cysteine methyl ester.

It belongs to the small GTPase superfamily. Rab family. As to quaternary structure, interacts with GARP complex component vps-52. Interacts (in GTP-bound form) with lin-10. May interact (in GTP-bound form) with eat-17. As to expression, highly expressed in body wall muscles, pharyngeal and vulval muscles, hypodermis, intestine, the gonad, coelomocytes, and neurons, including command interneuron (at protein level). Highly expressed in the terminal bulb muscles.

It is found in the perikaryon. It localises to the cell projection. Its subcellular location is the dendrite. The protein resides in the golgi apparatus. The protein localises to the cytoplasmic vesicle. Its function is as follows. The small GTPases Rab are key regulators of intracellular membrane trafficking, from the formation of transport vesicles to their fusion with membranes. Rabs cycle between an inactive GDP-bound form and an active GTP-bound form that is able to recruit to membranes different set of downstream effectors directly responsible for vesicle formation, movement, tethering and fusion. In its active GTP-bound form, acts redundantly with rab-6.1 (in its active GTP-bound form) to positively regulate the retrograde trafficking of cargo molecules from endosomes to the Golgi compartment. Required for the retrograde trafficking of glr-1, a subunit of AMPA-type glutamate receptors (AMPRs), out of early endosomes and into the Golgi compartment in neurons. Its role in glr-1 trafficking may partly be mediated by its interaction with lin-10 and association with components of the retromer complex such as rme-8. Together with rab-6.2, promotes the retrograde trafficking of mig-14 from endosomes to Golgi structures in the intestine. Plays a role in the epidermis to promote cuticle integrity and impermeability of the cuticle barrier to exogenous molecules. May have a role in the glycosylation of the cuticular surface. Required for seam cell division and alae formation. Required for grinder formation, which is the feeding organ that breaks down food. In contrast to rab-6.1, may play a minor role in the exocytosis of secretory vesicles (cortical granules) during the oocyte-to-embryo transition. In Caenorhabditis elegans, this protein is Ras-related protein rab-6.2.